The chain runs to 302 residues: Deoxyhypusine hydroxylase (302 aa).

Residue Met-1 is modified to N-acetylmethionine. HEAT-like PBS-type repeat units lie at residues 54-80 (LKHELAYCLGQMQDARAIPMLVDVLQD), 87-113 (VRHEAGEALGAIGDPEVLEILKQYSSD), 174-200 (ERYRAMFALRNAGGEEAALALAEGLHC), 205-231 (FRHEVGYVLGQLQHEAAVPQLAAALAR), and 238-264 (VRHECAEALGAIARPACLAALQAHADD). Positions 56, 89, and 90 each coordinate Fe cation. Fe cation-binding residues include His-207, His-240, and Glu-241.

This sequence belongs to the deoxyhypusine hydroxylase family. Fe(2+) serves as cofactor.

It catalyses the reaction [eIF5A protein]-deoxyhypusine + AH2 + O2 = [eIF5A protein]-hypusine + A + H2O. The protein operates within protein modification; eIF5A hypusination. Catalyzes the hydroxylation of the N(6)-(4-aminobutyl)-L-lysine intermediate produced by deoxyhypusine synthase/DHPS on a critical lysine of the eukaryotic translation initiation factor 5A/eIF-5A. This is the second step of the post-translational modification of that lysine into an unusual amino acid residue named hypusine. Hypusination is unique to mature eIF-5A factor and is essential for its function. In Homo sapiens (Human), this protein is Deoxyhypusine hydroxylase.